Here is a 1119-residue protein sequence, read N- to C-terminus: SH3 and PX domain-containing protein 2A (1119 aa).

One can recognise a PX domain in the interval 4-128 (RTVLDVKVVD…RFFETKPDDI (125 aa)). SH3 domains are found at residues 149–208 (MVLE…SQSG) and 249–308 (SREE…KLKD). 5 disordered regions span residues 388 to 429 (SSAT…PPRR), 494 to 595 (APSS…SNPA), 641 to 815 (SSDD…HESV), 914 to 941 (NLRSMSNPSPPIPSKPPGGFSKPTAMLN), and 957 to 1004 (RPQS…SSFT). The 60-residue stretch at 445–504 (TVEAEYYTIAEFQSSISDGISFRGGQKADVIEKNSGGWWYVQIGDTEGWAPSSYIDKRKK) folds into the SH3 3 domain. 2 stretches are compositionally biased toward basic and acidic residues: residues 581–590 (PKPEPRKFEI) and 688–718 (GRAERHSSKLFSDESARNPKREPVMRKDVEI). The segment covering 779–802 (TASVVSSEDSTSSRSTSDLSSVYS) has biased composition (low complexity). The span at 806–815 (RGGESDHESV) shows a compositional bias: basic and acidic residues. The SH3 4 domain occupies 812–871 (HESVLFRTTDAYERAQESELSFPAGVEVEVLEKQESGWWFVRWGSDEGWVPTFYLEPIKH). The SH3 5 domain occupies 1058 to 1119 (NLREVYVSIA…VPSNYLERKK (62 aa)).

It belongs to the SH3PXD2 family. In terms of processing, tyrosine phosphorylated.

The protein resides in the cytoplasm. Its subcellular location is the cell projection. It localises to the podosome. Functionally, adapter protein involved in invadopodia and podosome formation and extracellular matrix degradation. This Danio rerio (Zebrafish) protein is SH3 and PX domain-containing protein 2A (sh3pxd2a).